A 119-amino-acid chain; its full sequence is uncharacterized protein (119 aa).

Residues 1–20 (MPHLAAEAHTWPPHISHSTL) are disordered. A helical transmembrane segment spans residues 74 to 94 (LLFVVHQGHIGTGLIVFIICW).

The protein localises to the membrane. This is an uncharacterized protein from Saccharomyces cerevisiae (strain ATCC 204508 / S288c) (Baker's yeast).